A 553-amino-acid polypeptide reads, in one-letter code: Putative transport protein ASA_0825 (553 aa).

The next 5 helical transmembrane spans lie at 4 to 24 (IALS…LGNW), 29 to 49 (VGLG…FAGV), 65 to 85 (FGLI…FFSS), 95 to 115 (GFAA…HQLF), and 158 to 178 (MGYA…MWLV). RCK C-terminal domains are found at residues 191–276 (DLFE…VLGE) and 279–361 (ETSL…VVGN). 6 helical membrane passes run 371-391 (MLPV…PFYL), 403-425 (AGGP…LYWF), 439-459 (IVLF…DTLI), 465-485 (AWMM…GVLA), 493-513 (YLTL…LAFA), and 533-553 (LVMF…WAGV).

The protein belongs to the AAE transporter (TC 2.A.81) family. YidE subfamily.

It is found in the cell membrane. The protein is Putative transport protein ASA_0825 of Aeromonas salmonicida (strain A449).